We begin with the raw amino-acid sequence, 381 residues long: Arrestin-C (381 aa).

The protein belongs to the arrestin family. Homodimer; disulfide-linked in response to retinal illumination. Interacts with CXCR4; the interaction is dependent on the C-terminal phosphorylation of CXCR4 and modulates the calcium ion mobilization activity of CXCR4. Interacts with GPR84. As to expression, inner and outer segments, and the inner plexiform regions of the retina.

It localises to the photoreceptor inner segment. Its subcellular location is the cell projection. It is found in the cilium. The protein resides in the photoreceptor outer segment. Its function is as follows. May play a role in an as yet undefined retina-specific signal transduction. Could bind to photoactivated-phosphorylated red/green opsins. This is Arrestin-C (Arr3) from Mus musculus (Mouse).